A 671-amino-acid chain; its full sequence is DNA ligase (671 aa).

NAD(+)-binding positions include 32 to 36 (DAEYD), 81 to 82 (SL), and Glu113. Lys115 acts as the N6-AMP-lysine intermediate in catalysis. Residues Arg136, Glu173, Lys290, and Lys314 each contribute to the NAD(+) site. Zn(2+) is bound by residues Cys408, Cys411, Cys426, and Cys432. The 79-residue stretch at 593–671 (EIDSPFAGKT…EAEMLRLLGS (79 aa)) folds into the BRCT domain.

The protein belongs to the NAD-dependent DNA ligase family. LigA subfamily. Mg(2+) serves as cofactor. The cofactor is Mn(2+).

It catalyses the reaction NAD(+) + (deoxyribonucleotide)n-3'-hydroxyl + 5'-phospho-(deoxyribonucleotide)m = (deoxyribonucleotide)n+m + AMP + beta-nicotinamide D-nucleotide.. Functionally, DNA ligase that catalyzes the formation of phosphodiester linkages between 5'-phosphoryl and 3'-hydroxyl groups in double-stranded DNA using NAD as a coenzyme and as the energy source for the reaction. It is essential for DNA replication and repair of damaged DNA. The sequence is that of DNA ligase from Shigella dysenteriae serotype 1 (strain Sd197).